The following is a 791-amino-acid chain: Splicing factor 3A subunit 1 (791 aa).

The tract at residues 1-41 (MQAGPVQAVPPPPPVATESKQPIEEEASSKEDPTPSKPVVG) is disordered. Lys-20 participates in a covalent cross-link: Glycyl lysine isopeptide (Lys-Gly) (interchain with G-Cter in SUMO2). A compositionally biased stretch (basic and acidic residues) spans 21 to 34 (QPIEEEASSKEDPT). An SURP motif 1 repeat occupies 52 to 94 (IVDKTASFVARNGPEFEARIRQNEINNPKFNFLNPNDPYHAYY). Position 55 is an N6-acetyllysine (Lys-55). A Glycyl lysine isopeptide (Lys-Gly) (interchain with G-Cter in SUMO2) cross-link involves residue Lys-131. One copy of the SURP motif 2 repeat lies at 166 to 208 (VVKLTAQFVARNGRQFLTQLMQKEQRNYQFDFLRPQHSLFNYF). Positions 318–411 (GESEEVEMEV…APAPDEYLVS (94 aa)) are disordered. Phosphoserine is present on residues Ser-320 and Ser-329. Residues 320 to 336 (SEEVEMEVESDEEDQEK) show a composition bias toward acidic residues. Residues 340 to 351 (TPSQLDQDTQVQ) are compositionally biased toward polar residues. Acidic residues predominate over residues 352-362 (DMDEGSDDEEE). Ser-357 carries the post-translational modification Phosphoserine. Over residues 366-382 (VPPPPETPMPPPLPPTP) the composition is skewed to pro residues. Residues 386-395 (IVRKDYDPKA) are compositionally biased toward basic and acidic residues. Ser-411 carries the phosphoserine modification. Lys-422 is covalently cross-linked (Glycyl lysine isopeptide (Lys-Gly) (interchain with G-Cter in SUMO2)). Ser-449 carries the phosphoserine modification. Tyr-454 is subject to Phosphotyrosine. Residues 486 to 500 (IGEEEIQKPEEKVTW) show a composition bias toward basic and acidic residues. 3 disordered regions span residues 486–516 (IGEEEIQKPEEKVTWDGHSGSMARTQQAAQA), 528–582 (HKAK…AMPP), and 664–684 (PMPPVHPPPPMEDEPPSKKLK). Lys-497 participates in a covalent cross-link: Glycyl lysine isopeptide (Lys-Gly) (interchain with G-Cter in SUMO2). Ser-506 bears the Phosphoserine mark. Over residues 507–516 (MARTQQAAQA) the composition is skewed to polar residues. Lys-540 participates in a covalent cross-link: Glycyl lysine isopeptide (Lys-Gly) (interchain with G-Cter in SUMO2). Polar residues predominate over residues 561–570 (ATNIPSSAPP). Residues 664-673 (PMPPVHPPPP) show a composition bias toward pro residues. The interval 678-700 (PPSKKLKTEDSLMPEEEFLRRNK) is required and sufficient for nuclear import. Lys-684 participates in a covalent cross-link: Glycyl lysine isopeptide (Lys-Gly) (interchain with G-Cter in SUMO2). The 84-residue stretch at 705 to 788 (IKVQVPNMQD…IHLALKERGG (84 aa)) folds into the Ubiquitin-like domain. Tyr-757 carries the phosphotyrosine modification.

Component of the 17S U2 SnRNP complex, a ribonucleoprotein complex that contains small nuclear RNA (snRNA) U2 and a number of specific proteins. Part of the SF3A subcomplex of the 17S U2 SnRNP complex which is composed of three subunits; SF3A3/SAP61, SF3A2/SAP62 and SF3A1/SAP114. SF3A associates with the splicing factor SF3B and a 12S RNA unit to form the mature 17S U2 small nuclear ribonucleoprotein complex (17S U2 snRNP). SF3A1 functions as a scaffold that interacts directly with both SF3A2 and SF3A3. Identified in the spliceosome 'E' complex, a precursor of the spliceosome 'A' complex. Identified in the spliceosome 'A' and 'B' complexes. Identified in the spliceosome 'C' complex. Interacts with P2RX6; resulting in a reduction of the splicing activity.

It localises to the nucleus. The protein resides in the nucleus speckle. Functionally, component of the 17S U2 SnRNP complex of the spliceosome, a large ribonucleoprotein complex that removes introns from transcribed pre-mRNAs. The 17S U2 SnRNP complex (1) directly participates in early spliceosome assembly and (2) mediates recognition of the intron branch site during pre-mRNA splicing by promoting the selection of the pre-mRNA branch-site adenosine, the nucleophile for the first step of splicing. Within the 17S U2 SnRNP complex, SF3A1 is part of the SF3A subcomplex that contributes to the assembly of the 17S U2 snRNP, and the subsequent assembly of the pre-spliceosome 'E' complex and the pre-catalytic spliceosome 'A' complex. Involved in pre-mRNA splicing as a component of pre-catalytic spliceosome 'B' complexes. In Mus musculus (Mouse), this protein is Splicing factor 3A subunit 1 (Sf3a1).